A 220-amino-acid polypeptide reads, in one-letter code: Claudin-24 (220 aa).

Over 1–10 (MALIFRTAMQ) the chain is Cytoplasmic. Residues 11–31 (SVGLLLSLLGWILSIITTYLP) form a helical membrane-spanning segment. Residues 32–81 (HWKNLNLDLNEMENWTMGLWQTCVIQEEVGMQCKDFDSFLALPAELRVSR) lie on the Extracellular side of the membrane. The chain crosses the membrane as a helical span at residues 82 to 102 (ILMFLSNGLGFLGLLVSGFGL). Residues 103-117 (DCLRIGESQRDLKRR) are Cytoplasmic-facing. A helical transmembrane segment spans residues 118–138 (LLILGGILSWASGITALVPVS). Residues 139–161 (WVAHKTVQEFWDENVPDFVPRWE) are Extracellular-facing. A helical membrane pass occupies residues 162 to 182 (FGEALFLGWFAGLSLLLGGCL). The Cytoplasmic portion of the chain corresponds to 183 to 220 (LNCAACSSHAPLALGHYAVAQMQTQCPYLEDGTADPQV).

The protein belongs to the claudin family.

The protein localises to the cell junction. It is found in the tight junction. The protein resides in the cell membrane. Plays a major role in tight junction-specific obliteration of the intercellular space, through calcium-independent cell-adhesion activity. The polypeptide is Claudin-24 (Homo sapiens (Human)).